The chain runs to 893 residues: DNA mismatch repair protein MutS (893 aa).

The segment covering 1–17 (MESTMSSASTNASPPSA) has biased composition (low complexity). The tract at residues 1 to 22 (MESTMSSASTNASPPSASEKHT) is disordered. An ATP-binding site is contributed by 641 to 648 (GPNMGGKS).

This sequence belongs to the DNA mismatch repair MutS family.

Its function is as follows. This protein is involved in the repair of mismatches in DNA. It is possible that it carries out the mismatch recognition step. This protein has a weak ATPase activity. In Herminiimonas arsenicoxydans, this protein is DNA mismatch repair protein MutS.